The sequence spans 135 residues: Cytochrome c oxidase subunit 2 (135 aa).

Residues His81, Cys116, Cys120, and His124 each coordinate Cu cation.

This sequence belongs to the cytochrome c oxidase subunit 2 family.

It is found in the cell membrane. It catalyses the reaction 4 Fe(II)-[cytochrome c] + O2 + 8 H(+)(in) = 4 Fe(III)-[cytochrome c] + 2 H2O + 4 H(+)(out). Subunits I and II form the functional core of the enzyme complex. Electrons originating in cytochrome c are transferred via heme a and Cu(A) to the binuclear center formed by heme a3 and Cu(B). This is Cytochrome c oxidase subunit 2 (cbaB) from Thermus thermophilus.